The sequence spans 505 residues: TBC1 domain family member 22B (505 aa).

The residue at position 2 (Ala2) is an N-acetylalanine. Phosphoserine occurs at positions 58 and 116. The disordered stretch occupies residues 105–146; sequence SKLRVKPERSQSTTSDVPANYKVIKSSSDAQLSRNSSDTCLR. Over residues 129–146 the composition is skewed to polar residues; the sequence is KSSSDAQLSRNSSDTCLR. Ser154 carries the post-translational modification Phosphoserine. One can recognise a Rab-GAP TBC domain in the interval 210-434; it reads GVPREVRPIT…RLWDTYQSEP (225 aa).

In terms of assembly, interacts with ACBD3 and ARFGEF1. Interacts with YWHAB, YWHAE, YWHAG, YWHAH, YWHAQ and YWHAZ.

May act as a GTPase-activating protein for Rab family protein(s). The chain is TBC1 domain family member 22B (TBC1D22B) from Homo sapiens (Human).